We begin with the raw amino-acid sequence, 278 residues long: Large ribosomal subunit protein uL2 (278 aa).

Disordered stretches follow at residues 1 to 58 and 225 to 278; these read MAIR…GGGH and VMNP…KNKR. Residues 37–58 show a composition bias toward basic residues; sequence LHGRGGRNAHGRITTRHKGGGH. A compositionally biased stretch (basic and acidic residues) spans 253-267; sequence PEGRTRKNKASDKMI. A compositionally biased stretch (basic residues) spans 268 to 278; the sequence is VRRRRTGKNKR.

Belongs to the universal ribosomal protein uL2 family. As to quaternary structure, part of the 50S ribosomal subunit. Forms a bridge to the 30S subunit in the 70S ribosome.

One of the primary rRNA binding proteins. Required for association of the 30S and 50S subunits to form the 70S ribosome, for tRNA binding and peptide bond formation. It has been suggested to have peptidyltransferase activity; this is somewhat controversial. Makes several contacts with the 16S rRNA in the 70S ribosome. The chain is Large ribosomal subunit protein uL2 from Rhodococcus erythropolis (strain PR4 / NBRC 100887).